Reading from the N-terminus, the 224-residue chain is MGELFTFFGLISHDKTFIYMTHMLLAAGIALMLVKMAMSNLKVVPTGTQNVMEAYISGVLKMGTDVMGQEAARRYLPLVATIGLFVGIANLIGVVPGFEAPTAFLEFAFTLALSVFIYYNYEGIRRQGVVKYFKHFLGPVWWLYWLMFPIEIVSHFSRLVSLSFRLFGNVKGDDMFLMVILMLAPWVLPMIPYALLTFMAFLQAFIFMMLTYVYLGSAIAVEEH.

The next 6 membrane-spanning stretches (helical) occupy residues 17–37 (FIYM…VKMA), 78–98 (LVAT…VPGF), 104–124 (FLEF…YEGI), 136–156 (FLGP…VSHF), 176–196 (FLMV…YALL), and 201–221 (FLQA…AIAV).

This sequence belongs to the ATPase A chain family. As to quaternary structure, F-type ATPases have 2 components, CF(1) - the catalytic core - and CF(0) - the membrane proton channel. CF(1) has five subunits: alpha(3), beta(3), gamma(1), delta(1), epsilon(1). CF(0) has three main subunits: a(1), b(2) and c(9-12). The alpha and beta chains form an alternating ring which encloses part of the gamma chain. CF(1) is attached to CF(0) by a central stalk formed by the gamma and epsilon chains, while a peripheral stalk is formed by the delta and b chains.

Its subcellular location is the cell inner membrane. In terms of biological role, key component of the proton channel; it plays a direct role in the translocation of protons across the membrane. This is ATP synthase subunit a from Sulfurimonas denitrificans (strain ATCC 33889 / DSM 1251) (Thiomicrospira denitrificans (strain ATCC 33889 / DSM 1251)).